We begin with the raw amino-acid sequence, 325 residues long: MQIFDYDNILLLPRKCRVESRSECDASVTLGARSFRLPVVPANMKTVVDEPICLWLAQNGYFYVMHRFDLDNVKFVKQMHAKGVFASISLGVKKPDYDTVDQLVAEGLVPEYITIDIAHGHADSVKNMIGYLKQKLPGSFVIAGNIGTPEAVIDLENWGADATKVGIGPGKVCITKLKTGFGTGGWQLSALKWCARVATKPIIADGGIRDHGDIAKSVRFGASMVMIGSLFAGHEESPGRTVEVDGALFKEYYGSASDFNKGEYKHVEGKRILEPIKGKLADTLIEMEQDVQSSISYAGGRALMDIRKVNYVTLGGDNAGEHLLM.

Cys-173 serves as the catalytic Thioimidate intermediate. Residue 202–225 (IIADGGIRDHGDIAKSVRFGASMV) participates in NADP(+) binding.

It belongs to the IMPDH/GMPR family. GuaC type 2 subfamily.

It catalyses the reaction IMP + NH4(+) + NADP(+) = GMP + NADPH + 2 H(+). Catalyzes the irreversible NADPH-dependent deamination of GMP to IMP. It functions in the conversion of nucleobase, nucleoside and nucleotide derivatives of G to A nucleotides, and in maintaining the intracellular balance of A and G nucleotides. The protein is GMP reductase of Variovorax paradoxus (strain S110).